The chain runs to 407 residues: Acetate kinase (407 aa).

Asparagine 10 provides a ligand contact to Mg(2+). Lysine 17 is an ATP binding site. Arginine 93 contributes to the substrate binding site. The active-site Proton donor/acceptor is the aspartate 150. Residues 210–214 (HLGNG), 284–286 (DMR), and 332–336 (GVGEN) contribute to the ATP site. Glutamate 386 is a Mg(2+) binding site.

This sequence belongs to the acetokinase family. Homodimer. Requires Mg(2+) as cofactor. Mn(2+) serves as cofactor.

Its subcellular location is the cytoplasm. It carries out the reaction acetate + ATP = acetyl phosphate + ADP. It functions in the pathway metabolic intermediate biosynthesis; acetyl-CoA biosynthesis; acetyl-CoA from acetate: step 1/2. In terms of biological role, catalyzes the formation of acetyl phosphate from acetate and ATP. Can also catalyze the reverse reaction. In Streptomyces coelicolor (strain ATCC BAA-471 / A3(2) / M145), this protein is Acetate kinase.